The chain runs to 780 residues: Kazrin (780 aa).

Residues 79 to 261 (AQVLLREEVV…LATLTKDVPK (183 aa)) are a coiled coil. Residues 295–430 (QQTLYHSHPP…TRHSLSLSEG (136 aa)) are disordered. Ser-357, Ser-372, and Ser-392 each carry phosphoserine. Residues 416–427 (SQCSPTRHSLSL) show a composition bias toward polar residues. 3 SAM domains span residues 451-516 (WKAG…YRDA), 529-593 (DHHW…LYQV), and 617-684 (WTNQ…STVF). Positions 692-780 (IRESERFGTP…EYSSLEVTNV (89 aa)) are disordered. Over residues 760-771 (LQGRPEQCRLEE) the composition is skewed to basic and acidic residues.

This sequence belongs to the kazrin family.

It localises to the cell junction. Its subcellular location is the nucleus. The protein localises to the cytoplasm. The protein resides in the cytoskeleton. Component of the cornified envelope of keratinocytes. May be involved in the interplay between adherens junctions and desmosomes. The function in the nucleus is not known. This chain is Kazrin (Kazn), found in Rattus norvegicus (Rat).